Here is a 493-residue protein sequence, read N- to C-terminus: Hexokinase-like 1 protein (493 aa).

Positions 38-488 (ASTCPILTKF…SGLGAALLAA (451 aa)) constitute a Hexokinase domain. The interval 93 to 232 (SGNEEGLFYA…GLDMRVSALV (140 aa)) is hexokinase small subdomain. The ADP site is built by glycine 107, threonine 108, and asparagine 109. Residues threonine 198, lysine 199, asparagine 233, and aspartate 234 each coordinate D-glucose. The segment at 233–477 (NDGVGTLAGA…SHVAIKHTKD (245 aa)) is hexokinase large subdomain. Threonine 257 serves as a coordination point for ADP. Residues asparagine 260, glutamate 287, and glutamate 317 each coordinate D-glucose. Position 442 (alanine 442) interacts with ADP.

This sequence belongs to the hexokinase family.

The catalysed reaction is a D-hexose + ATP = a D-hexose 6-phosphate + ADP + H(+). It catalyses the reaction D-fructose + ATP = D-fructose 6-phosphate + ADP + H(+). The enzyme catalyses D-glucose + ATP = D-glucose 6-phosphate + ADP + H(+). It participates in carbohydrate metabolism; hexose metabolism. Its pathway is carbohydrate degradation; glycolysis; D-glyceraldehyde 3-phosphate and glycerone phosphate from D-glucose: step 1/4. In terms of biological role, fructose and glucose phosphorylating enzyme. This is Hexokinase-like 1 protein from Arabidopsis thaliana (Mouse-ear cress).